Reading from the N-terminus, the 509-residue chain is Zinc finger protein Aiolos (509 aa).

Residues 1–85 (MEDIKPNVEL…PMGNAEEPEI (85 aa)) form a disordered region. The span at 10-20 (LKSTQEQSVPT) shows a compositional bias: polar residues. Threonine 20 is subject to Phosphothreonine. A compositionally biased stretch (basic and acidic residues) spans 56–72 (DSMKVKDEYSERDENVL). Residues lysine 61, lysine 73, and lysine 100 each participate in a glycyl lysine isopeptide (Lys-Gly) (interchain with G-Cter in SUMO2) cross-link. C2H2-type zinc fingers lie at residues 118-140 (MNCD…KRSH), 146-168 (FQCN…IKLH), and 174-196 (FKCH…LRTH). The C2H2-type 4; atypical zinc finger occupies 202–224 (YKCEFCGRSYKQRSSLEEHKERC). Residue lysine 245 forms a Glycyl lysine isopeptide (Lys-Gly) (interchain with G-Cter in SUMO2) linkage. Threonine 326 carries the post-translational modification Phosphothreonine. The tract at residues 365–421 (HLPEKSLPSERGLSPTNSGHDSTDTDSNHEERQNHIYQQNPMVPPRARNGMPLLKEG) is disordered. Serine 378 is modified (phosphoserine). The span at 385–398 (DSTDTDSNHEERQN) shows a compositional bias: basic and acidic residues. Residues 452-474 (YRCDHCRVLFLDYVMFTIHMGCH) form a C2H2-type 5 zinc finger. The segment at 452–504 (YRCDHCRVLFLDYVMFTIHMGCHGFRDPFECNMCGYRSHDRYEFSSHIARGEH) is mediates homodimerization and heterodimerization. The C2H2-type 6; atypical zinc-finger motif lies at 480–504 (FECNMCGYRSHDRYEFSSHIARGEH).

It belongs to the Ikaros C2H2-type zinc-finger protein family. In terms of assembly, homodimer. Heterodimer with other IKAROS family members. Interacts with IKZF4 and IKZF5. Interacts with IKZF1. Interacts with HRAS. Interacts with FOXP3; this interaction may be required for silencing target genes and regulating the suppressive activity of FOXP3-positive regulatory T-cells (Treg). Interacts with BCL21L; this interaction blocks the anti-apoptotic role of BCL21L. Associates with histone deacetylase complexes containing HDAC1, MTA2 and SIN3A.

The protein localises to the nucleus. The protein resides in the cytoplasm. In terms of biological role, transcription factor that plays an important role in the regulation of lymphocyte differentiation. Plays an essential role in regulation of B-cell differentiation, proliferation and maturation to an effector state. Involved in regulating BCL2 expression and controlling apoptosis in T-cells in an IL2-dependent manner. The sequence is that of Zinc finger protein Aiolos (IKZF3) from Bos taurus (Bovine).